A 440-amino-acid chain; its full sequence is Glycerophosphocholine cholinephosphodiesterase ENPP6 (440 aa).

A signal peptide spans 1 to 22; it reads MAVKLGTLLLALALGLAQPASA. Substrate-binding residues include aspartate 32, serine 71, and asparagine 92. Residues aspartate 32 and serine 71 each contribute to the Zn(2+) site. Serine 71 (nucleophile) is an active-site residue. A Phosphoserine modification is found at serine 71. Asparagine 100 and asparagine 118 each carry an N-linked (GlcNAc...) asparagine glycan. Cysteine 142 and cysteine 154 are disulfide-bonded. Aspartate 193 provides a ligand contact to substrate. Residues aspartate 193, histidine 197, aspartate 240, and histidine 241 each contribute to the Zn(2+) site. Position 241 (histidine 241) interacts with substrate. Asparagine 341 carries N-linked (GlcNAc...) asparagine glycosylation. Histidine 354 is a substrate binding site. Histidine 354 contributes to the Zn(2+) binding site. N-linked (GlcNAc...) asparagine glycosylation is present at asparagine 404. A lipid anchor (GPI-anchor amidated serine) is attached at serine 419. Residues 420 to 440 constitute a propeptide, removed in mature form; it reads TAPPVWPSHCALALILLFLLA.

The protein belongs to the nucleotide pyrophosphatase/phosphodiesterase family. In terms of assembly, homodimer; disulfide-linked. Homotetramer. Zn(2+) is required as a cofactor. In terms of tissue distribution, predominantly expressed in kidney and brain. In the kidney, expressed specifically in the proximal tubules and thin descending limbs of Henle (at protein level).

The protein resides in the cell membrane. It carries out the reaction sn-glycerol 3-phosphocholine + H2O = phosphocholine + glycerol + H(+). It catalyses the reaction a 1-acyl-sn-glycero-3-phosphocholine + H2O = a 1-acyl-sn-glycerol + phosphocholine + H(+). The enzyme catalyses a 1-O-alkyl-sn-glycero-3-phosphocholine + H2O = a 1-O-alkyl-sn-glycerol + phosphocholine + H(+). The catalysed reaction is 1-dodecanoyl-sn-glycero-3-phosphocholine + H2O = 1-dodecanoyl-sn-glycerol + phosphocholine + H(+). It carries out the reaction 1-hexadecanoyl-sn-glycero-3-phosphocholine + H2O = 1-hexadecanoyl-sn-glycerol + phosphocholine + H(+). It catalyses the reaction 1-(5Z,8Z,11Z,14Z-eicosatetraenoyl)-sn-glycero-3-phosphocholine + H2O = 1-(5Z,8Z,11Z,14Z-eicosatetraenoyl)-sn-glycerol + phosphocholine + H(+). The enzyme catalyses 1-tetradecanoyl-sn-glycero-3-phosphocholine + H2O = 1-tetradecanoyl-sn-glycerol + phosphocholine + H(+). The catalysed reaction is sphing-4-enine-phosphocholine + H2O = sphing-4-enine + phosphocholine + H(+). It carries out the reaction 1-(9Z-octadecenoyl)-sn-glycero-3-phosphocholine + H2O = 1-(9Z-octadecenoyl)-sn-glycerol + phosphocholine + H(+). It catalyses the reaction 1-(9Z,12Z)-octadecadienoyl-sn-glycero-3-phosphocholine + H2O = 1-(9Z,12Z-octadecadienoyl)-sn-glycerol + phosphocholine + H(+). The enzyme catalyses glycero-2-phosphocholine + H2O = phosphocholine + glycerol + H(+). With respect to regulation, inhibited by EDTA and EGTA in vitro. Functionally, choline-specific glycerophosphodiesterase that hydrolyzes glycerophosphocholine (GPC) and lysophosphatidylcholine (LPC) and contributes to supplying choline to the cells. Has a preference for LPC with short (12:0 and 14:0) or polyunsaturated (18:2 and 20:4) fatty acids. In vitro, hydrolyzes only choline-containing lysophospholipids, such as sphingosylphosphorylcholine (SPC), platelet-activating factor (PAF) and lysoPAF, but not other lysophospholipids. The protein is Glycerophosphocholine cholinephosphodiesterase ENPP6 of Homo sapiens (Human).